The primary structure comprises 268 residues: Zinc transporter ZupT (268 aa).

8 helical membrane-spanning segments follow: residues 6-26 (IIFA…GGVI), 37-57 (FLAG…FVEI), 73-93 (GGNW…AVID), 126-146 (VLTA…TFVA), 153-173 (IAIP…IAVA), 189-209 (WATL…ILLM), 211-231 (FLGP…MVFI), and 248-268 (TAIY…LLFI). The Fe(2+) site is built by Asn136 and Glu139. Zn(2+) is bound by residues Glu139 and His164. Fe(2+)-binding residues include Asn165, Glu168, and Glu197. Glu168 lines the Zn(2+) pocket.

This sequence belongs to the ZIP transporter (TC 2.A.5) family. ZupT subfamily.

It is found in the cell membrane. The enzyme catalyses Zn(2+)(in) = Zn(2+)(out). Mediates zinc uptake. May also transport other divalent cations. This chain is Zinc transporter ZupT, found in Corynebacterium efficiens (strain DSM 44549 / YS-314 / AJ 12310 / JCM 11189 / NBRC 100395).